The sequence spans 269 residues: MPMETGFTSPGPLIVQIGGFAVRWYSLLILAGIIAGTLLSQKLAPERKVAPEVLSDLVVWLVVGAIPMARLYYVLFEWQRFAGEPWWKVFAIWEGGIAIHGAILGGLLAGWLFCRRNGYSLLTMIDLAAPGLILGQAIGRWGNFFNSEAYGAPTNLPWKLFIPEANRPPGMAAFAYYHPTFLYESLWNLGVLALLLFVFFRFKNLRPGSIACLYALAYSVGRFWIEGLRLDSLMVGPLRTAQLVSLAGIVLGAVGLWWLNRRSARQEAP.

4 consecutive transmembrane segments (helical) span residues Ile14 to Ile34, Val49 to Ala69, Val89 to Ala109, and Gly118 to Ile138. An a 1,2-diacyl-sn-glycero-3-phospho-(1'-sn-glycerol)-binding site is contributed by Arg140. The next 3 membrane-spanning stretches (helical) occupy residues Thr180–Phe200, Gly208–Leu228, and Thr240–Asn260.

The protein belongs to the Lgt family.

The protein localises to the cell inner membrane. It carries out the reaction L-cysteinyl-[prolipoprotein] + a 1,2-diacyl-sn-glycero-3-phospho-(1'-sn-glycerol) = an S-1,2-diacyl-sn-glyceryl-L-cysteinyl-[prolipoprotein] + sn-glycerol 1-phosphate + H(+). Its pathway is protein modification; lipoprotein biosynthesis (diacylglyceryl transfer). Its function is as follows. Catalyzes the transfer of the diacylglyceryl group from phosphatidylglycerol to the sulfhydryl group of the N-terminal cysteine of a prolipoprotein, the first step in the formation of mature lipoproteins. The chain is Phosphatidylglycerol--prolipoprotein diacylglyceryl transferase from Gloeobacter violaceus (strain ATCC 29082 / PCC 7421).